The following is a 40-amino-acid chain: Biotin carboxylase (40 aa).

The 40-residue stretch at 1 to 40 folds into the Biotin carboxylation domain; it reads ILVANRGEIAVRLLEEAPSPALTPELRITAYLPSGGPFVR. An ATP-grasp domain is found at 13–27; it reads LLEEAPSPALTPELR.

In terms of assembly, acetyl-CoA carboxylase is a heterohexamer of biotin carboxyl carrier protein, biotin carboxylase and the two subunits of carboxyl transferase in a 2:2 complex. Mg(2+) is required as a cofactor. It depends on Mn(2+) as a cofactor.

The enzyme catalyses N(6)-biotinyl-L-lysyl-[protein] + hydrogencarbonate + ATP = N(6)-carboxybiotinyl-L-lysyl-[protein] + ADP + phosphate + H(+). The protein operates within lipid metabolism; malonyl-CoA biosynthesis; malonyl-CoA from acetyl-CoA: step 1/1. Its function is as follows. This protein is a component of the acetyl coenzyme A carboxylase complex; first, biotin carboxylase catalyzes the carboxylation of the carrier protein and then the transcarboxylase transfers the carboxyl group to form malonyl-CoA. The polypeptide is Biotin carboxylase (Populus euphratica (Euphrates poplar)).